Consider the following 152-residue polypeptide: Antiholin-like protein LrgA (152 aa).

A run of 4 helical transmembrane segments spans residues 23–43 (YSIF…KIIE), 45–65 (FMPI…IALC), 77–97 (VGTA…ISVI), and 108–128 (ILII…TGFA).

It belongs to the CidA/LrgA family. LrgA subfamily.

The protein localises to the cell membrane. Functionally, inhibits the expression or activity of extracellular murein hydrolases by interacting, possibly with LrgB, with the holin-like proteins CidA and/or CidB. The LrgAB and CidAB proteins may affect the proton motive force of the membrane. May be involved in programmed cell death (PCD), possibly triggering PCD in response to antibiotics and environmental stresses. The polypeptide is Antiholin-like protein LrgA (Staphylococcus epidermidis (strain ATCC 35984 / DSM 28319 / BCRC 17069 / CCUG 31568 / BM 3577 / RP62A)).